Here is a 494-residue protein sequence, read N- to C-terminus: Rho GTPase-activating protein 19 (494 aa).

Ala2 bears the N-acetylalanine mark. A phosphoserine mark is found at Ser7 and Ser31. Positions 102–308 constitute a Rho-GAP domain; sequence MSLKRKEKGV…FMIKHSQKLF (207 aa). The segment at 399 to 451 is disordered; sequence QSLTQTPGREPSTPRVQKRARSRSFSGLIKRKVLGSQMTSEKKNSSPAPESVA. Phosphoserine occurs at positions 422, 438, and 470. Thr478 carries the phosphothreonine modification.

Functionally, GTPase activator for the Rho-type GTPases by converting them to an inactive GDP-bound state. This Mus musculus (Mouse) protein is Rho GTPase-activating protein 19 (Arhgap19).